The chain runs to 314 residues: Olfactory receptor 5P67 (314 aa).

Topologically, residues 1–28 (MAFLEDGNHTAVTEFILLGLTDDPVLRV) are extracellular. N-linked (GlcNAc...) asparagine glycosylation occurs at Asn-8. The helical transmembrane segment at 29–49 (ILFTIILCIYLVTVSGNLSTI) threads the bilayer. At 50–57 (LLIRVSSQ) the chain is on the cytoplasmic side. A helical membrane pass occupies residues 58-78 (LHHPMYFFLSHVGSVDIGYSS). Over 79 to 102 (SVTPNMLVNFLVEKHTIAYLGCGI) the chain is Extracellular. A disulfide bridge links Cys-100 with Cys-192. Residues 103–123 (QLSSAAFFGTAECFLLATMAY) traverse the membrane as a helical segment. Residues 124 to 136 (DRFVAICNPLLYS) lie on the Cytoplasmic side of the membrane. Residues 137–157 (TKMSTQTCIQLVVGSYTGGIL) form a helical membrane-spanning segment. Over 158-199 (NASFAIISFFSFLFCGPNRINHFYCDFAPLVELSCSDINVSV) the chain is Extracellular. The helical transmembrane segment at 200-220 (VITTIFSASVTIITVFVIAIS) threads the bilayer. The Cytoplasmic segment spans residues 221 to 240 (YTYILITILKMRSTEGRHKA). Residues 241 to 261 (FSTCTSYLTAVTLFYGTVTFI) traverse the membrane as a helical segment. The Extracellular segment spans residues 262-274 (YVVPKSNYSTDQN). Asn-268 carries an N-linked (GlcNAc...) asparagine glycan. A helical membrane pass occupies residues 275 to 295 (KVASVFYIVVIPMLNPLIYSL). The Cytoplasmic segment spans residues 296–314 (RNNDIKGALKRQLGKKTFS).

This sequence belongs to the G-protein coupled receptor 1 family.

It is found in the cell membrane. In terms of biological role, potential odorant receptor. The chain is Olfactory receptor 5P67 from Mus musculus (Mouse).